The sequence spans 821 residues: DNA gyrase subunit A (821 aa).

A Topo IIA-type catalytic domain is found at 35–500; that stretch reads LPDVRDGLKP…GLETIEDEDL (466 aa). Tyrosine 123 functions as the O-(5'-phospho-DNA)-tyrosine intermediate in the catalytic mechanism. The GyrA-box motif lies at 527–533; it reads QKRGGKG.

The protein belongs to the type II topoisomerase GyrA/ParC subunit family. As to quaternary structure, heterotetramer, composed of two GyrA and two GyrB chains. In the heterotetramer, GyrA contains the active site tyrosine that forms a transient covalent intermediate with DNA, while GyrB binds cofactors and catalyzes ATP hydrolysis.

It is found in the cytoplasm. It carries out the reaction ATP-dependent breakage, passage and rejoining of double-stranded DNA.. A type II topoisomerase that negatively supercoils closed circular double-stranded (ds) DNA in an ATP-dependent manner to modulate DNA topology and maintain chromosomes in an underwound state. Negative supercoiling favors strand separation, and DNA replication, transcription, recombination and repair, all of which involve strand separation. Also able to catalyze the interconversion of other topological isomers of dsDNA rings, including catenanes and knotted rings. Type II topoisomerases break and join 2 DNA strands simultaneously in an ATP-dependent manner. The protein is DNA gyrase subunit A of Bacillus subtilis (strain 168).